A 589-amino-acid polypeptide reads, in one-letter code: Proline--tRNA ligase (589 aa).

This sequence belongs to the class-II aminoacyl-tRNA synthetase family. ProS type 1 subfamily. Homodimer.

It localises to the cytoplasm. It catalyses the reaction tRNA(Pro) + L-proline + ATP = L-prolyl-tRNA(Pro) + AMP + diphosphate. Functionally, catalyzes the attachment of proline to tRNA(Pro) in a two-step reaction: proline is first activated by ATP to form Pro-AMP and then transferred to the acceptor end of tRNA(Pro). As ProRS can inadvertently accommodate and process non-cognate amino acids such as alanine and cysteine, to avoid such errors it has two additional distinct editing activities against alanine. One activity is designated as 'pretransfer' editing and involves the tRNA(Pro)-independent hydrolysis of activated Ala-AMP. The other activity is designated 'posttransfer' editing and involves deacylation of mischarged Ala-tRNA(Pro). The misacylated Cys-tRNA(Pro) is not edited by ProRS. The chain is Proline--tRNA ligase from Corynebacterium aurimucosum (strain ATCC 700975 / DSM 44827 / CIP 107346 / CN-1) (Corynebacterium nigricans).